Here is a 226-residue protein sequence, read N- to C-terminus: Ribose-5-phosphate isomerase A (226 aa).

Substrate contacts are provided by residues 26–29 (TGST), 82–85 (DGAD), and 95–98 (KGGG). Glu-104 serves as the catalytic Proton acceptor. Lys-122 lines the substrate pocket.

This sequence belongs to the ribose 5-phosphate isomerase family. As to quaternary structure, homodimer.

It catalyses the reaction aldehydo-D-ribose 5-phosphate = D-ribulose 5-phosphate. It functions in the pathway carbohydrate degradation; pentose phosphate pathway; D-ribose 5-phosphate from D-ribulose 5-phosphate (non-oxidative stage): step 1/1. In terms of biological role, catalyzes the reversible conversion of ribose-5-phosphate to ribulose 5-phosphate. The chain is Ribose-5-phosphate isomerase A from Streptococcus thermophilus (strain ATCC BAA-250 / LMG 18311).